A 62-amino-acid polypeptide reads, in one-letter code: Photosystem II reaction center protein Z (62 aa).

Helical transmembrane passes span alanine 8–alanine 28 and phenylalanine 41–valine 61.

Belongs to the PsbZ family. As to quaternary structure, PSII is composed of 1 copy each of membrane proteins PsbA, PsbB, PsbC, PsbD, PsbE, PsbF, PsbH, PsbI, PsbJ, PsbK, PsbL, PsbM, PsbT, PsbX, PsbY, PsbZ, Psb30/Ycf12, peripheral proteins PsbO, CyanoQ (PsbQ), PsbU, PsbV and a large number of cofactors. It forms dimeric complexes.

Its subcellular location is the cellular thylakoid membrane. Functionally, may control the interaction of photosystem II (PSII) cores with the light-harvesting antenna, regulates electron flow through the 2 photosystem reaction centers. PSII is a light-driven water plastoquinone oxidoreductase, using light energy to abstract electrons from H(2)O, generating a proton gradient subsequently used for ATP formation. The polypeptide is Photosystem II reaction center protein Z (Cyanothece sp. (strain PCC 7425 / ATCC 29141)).